The following is a 95-amino-acid chain: Osteocalcin (95 aa).

Residues 1–23 (MRTIFLLTLLTLAALCLSDLTDA) form the signal peptide. Positions 24–49 (KPSGPESDKAFMSKQEGNKVVNRLRR) are excised as a propeptide. A Gla domain is found at 46–92 (RLRRYLGASVPSPDPLEPTREQCELNPACDELSDQYGLKTAYKRIYG). Glu62, Glu66, Glu69, and Asp75 together coordinate Ca(2+). 3 positions are modified to 4-carboxyglutamate: Glu62, Glu66, and Glu69. Cysteines 68 and 74 form a disulfide.

The protein belongs to the osteocalcin/matrix Gla protein family. Gamma-carboxyglutamate residues are formed by vitamin K dependent carboxylation by GGCX. These residues are essential for the binding of calcium. Carboxylated in a Ptprv/Esp-dependent process. Decarboxylation promotes the hormone activity. In terms of tissue distribution, bone.

It is found in the secreted. In terms of biological role, the carboxylated form is one of the main organic components of the bone matrix, which constitutes 1-2% of the total bone protein: it acts as a negative regulator of bone formation and is required to limit bone formation without impairing bone resorption or mineralization. The carboxylated form binds strongly to apatite and calcium. Its function is as follows. The uncarboxylated form acts as a hormone secreted by osteoblasts, which regulates different cellular processes, such as energy metabolism, male fertility and brain development. Regulates of energy metabolism by acting as a hormone favoring pancreatic beta-cell proliferation, insulin secretion and sensitivity and energy expenditure. Uncarboxylated osteocalcin hormone also promotes testosterone production in the testes: acts as a ligand for G protein-coupled receptor GPRC6A at the surface of Leydig cells, initiating a signaling response that promotes the expression of enzymes required for testosterone synthesis in a CREB-dependent manner. Also acts as a regulator of brain development: osteocalcin hormone crosses the blood-brain barrier and acts as a ligand for GPR158 on neurons, initiating a signaling response that prevents neuronal apoptosis in the hippocampus, favors the synthesis of all monoamine neurotransmitters and inhibits that of gamma-aminobutyric acid (GABA). Osteocalcin also crosses the placenta during pregnancy and maternal osteocalcin is required for fetal brain development. The protein is Osteocalcin of Mus musculus (Mouse).